The chain runs to 79 residues: Dolichyl-diphosphooligosaccharide--protein glycosyltransferase subunit TMEM258 (79 aa).

2 helical membrane-spanning segments follow: residues 17-37 and 59-79; these read VFPH…AWFF and VASL…GIFV.

It belongs to the OST5 family. Component of the oligosaccharyltransferase (OST) complex.

The protein localises to the membrane. It localises to the endoplasmic reticulum. The protein resides in the cytoplasm. The protein operates within protein modification; protein glycosylation. Its function is as follows. Subunit of the oligosaccharyl transferase (OST) complex that catalyzes the initial transfer of a defined glycan (Glc(3)Man(9)GlcNAc(2) in eukaryotes) from the lipid carrier dolichol-pyrophosphate to an asparagine residue within an Asn-X-Ser/Thr consensus motif in nascent polypeptide chains, the first step in protein N-glycosylation. N-glycosylation occurs cotranslationally and the complex associates with the Sec61 complex at the channel-forming translocon complex that mediates protein translocation across the endoplasmic reticulum (ER). All subunits are required for a maximal enzyme activity. In Danio rerio (Zebrafish), this protein is Dolichyl-diphosphooligosaccharide--protein glycosyltransferase subunit TMEM258.